Reading from the N-terminus, the 146-residue chain is Basic phospholipase A2 paradoxin-like alpha chain (146 aa).

The first 27 residues, Met-1–Leu-27, serve as a signal peptide directing secretion. Intrachain disulfides connect Cys-38/Cys-99, Cys-54/Cys-145, Cys-56/Cys-72, Cys-71/Cys-126, Cys-78/Cys-119, Cys-88/Cys-112, and Cys-106/Cys-117. Ca(2+) is bound by residues Tyr-55, Gly-57, and Gly-59. The active site involves His-75. A Ca(2+)-binding site is contributed by Asp-76. The active site involves Asp-120.

This sequence belongs to the phospholipase A2 family. Group I subfamily. D49 sub-subfamily. In terms of assembly, heterotrimer of alpha, beta, and gamma chains; non-covalently linked. Ca(2+) serves as cofactor. In terms of tissue distribution, expressed by the venom gland.

It is found in the secreted. It catalyses the reaction a 1,2-diacyl-sn-glycero-3-phosphocholine + H2O = a 1-acyl-sn-glycero-3-phosphocholine + a fatty acid + H(+). In terms of biological role, heterotrimer: Snake venom phospholipase A2 (PLA2) heterotrimer that acts as a potent presynaptic neurotoxin by blocking synaptic transmission and synaptic vesicle recycling. May act by binding in a calcium-dependent fashion to neurotonal pentraxin-1 (NPTX1) and neurotonal pentraxin-2 (NPTX2), but not to neuronal pentraxin receptor (NPTXR). Also binds to taipoxin-associated calcium binding protein 49 (RCN2), a protein localized in the lumen of endoplasmic reticulum. Its function is as follows. Monomer (alpha chain): Snake venom phospholipase A2 (PLA2) alpha chain that possesses the same high enzymatic activity than the heterotrimer. PLA2 catalyzes the calcium-dependent hydrolysis of the 2-acyl groups in 3-sn-phosphoglycerides. This Oxyuranus microlepidotus (Inland taipan) protein is Basic phospholipase A2 paradoxin-like alpha chain.